The following is a 232-amino-acid chain: MCAPSGPGNKFPDFQAETNEGFISSFYDWIGKDSWAILFSHPRDFTPVCTTELARLVQLAPEFKKRNVKLIGLSCDSADSHSKWADDILALYKMKCVGCDSEKKLPYPIIADEDRSLATELGMMDPDERDEKGNTLTARCVFIIGSDKTLKLSILYPATTGRNFDEILRVVDSLQLTAVKLVATPVDWKDGDDCVVLPTIDDNEAKKLFGEKIHTIDLPSGKHYLRMVPHPK.

In terms of domain architecture, Thioredoxin spans Ser5 to Leu176. Cys49 is an active-site residue. Cys49 serves as the catalytic Cysteine sulfenic acid (-SOH) intermediate.

It belongs to the peroxiredoxin family. Prx6 subfamily.

It catalyses the reaction a hydroperoxide + [protein]-dithiol = [protein]-disulfide + an alcohol + H2O. Thiol-specific peroxidase that catalyzes the reduction of hydrogen peroxide and organic hydroperoxides to water and alcohols, respectively. Plays a role in cell protection against oxidative stress by detoxifying peroxides. The polypeptide is 1-Cys peroxiredoxin (TSA) (Onchocerca volvulus).